Consider the following 287-residue polypeptide: uncharacterized protein (287 aa).

Over residues 1-17 (MRWQGRRESDNVEDRRN) the composition is skewed to basic and acidic residues. The interval 1–29 (MRWQGRRESDNVEDRRNSSGGPSMGGPGF) is disordered. Residues 38–60 (LILLIVVLVAGYYGVDLTGLMTG) traverse the membrane as a helical segment.

Its subcellular location is the membrane. This is an uncharacterized protein from Escherichia coli O6:H1 (strain CFT073 / ATCC 700928 / UPEC).